A 352-amino-acid polypeptide reads, in one-letter code: Holliday junction branch migration complex subunit RuvB (352 aa).

The tract at residues 1 to 42 is disordered; that stretch reads MAIVSSSAGRADSQPPAAKSRVVDASPLPEEASPAREDGLRP. A large ATPase domain (RuvB-L) region spans residues 13–201; sequence SQPPAAKSRV…FGLIQRLEFY (189 aa). The span at 33–42 shows a compositional bias: basic and acidic residues; that stretch reads SPAREDGLRP. Residues leucine 40, arginine 41, glycine 82, lysine 85, threonine 86, threonine 87, arginine 191, tyrosine 201, and arginine 238 each coordinate ATP. Mg(2+) is bound at residue threonine 86. The interval 202–273 is small ATPAse domain (RuvB-S); that stretch reads GLEDLQAIVE…LVDEALTLHR (72 aa). Positions 276 to 352 are head domain (RuvB-H); sequence ARGLDASDRR…RRHLGWPELP (77 aa). Positions 331 and 336 each coordinate DNA.

Belongs to the RuvB family. As to quaternary structure, homohexamer. Forms an RuvA(8)-RuvB(12)-Holliday junction (HJ) complex. HJ DNA is sandwiched between 2 RuvA tetramers; dsDNA enters through RuvA and exits via RuvB. An RuvB hexamer assembles on each DNA strand where it exits the tetramer. Each RuvB hexamer is contacted by two RuvA subunits (via domain III) on 2 adjacent RuvB subunits; this complex drives branch migration. In the full resolvosome a probable DNA-RuvA(4)-RuvB(12)-RuvC(2) complex forms which resolves the HJ.

Its subcellular location is the cytoplasm. It carries out the reaction ATP + H2O = ADP + phosphate + H(+). Functionally, the RuvA-RuvB-RuvC complex processes Holliday junction (HJ) DNA during genetic recombination and DNA repair, while the RuvA-RuvB complex plays an important role in the rescue of blocked DNA replication forks via replication fork reversal (RFR). RuvA specifically binds to HJ cruciform DNA, conferring on it an open structure. The RuvB hexamer acts as an ATP-dependent pump, pulling dsDNA into and through the RuvAB complex. RuvB forms 2 homohexamers on either side of HJ DNA bound by 1 or 2 RuvA tetramers; 4 subunits per hexamer contact DNA at a time. Coordinated motions by a converter formed by DNA-disengaged RuvB subunits stimulates ATP hydrolysis and nucleotide exchange. Immobilization of the converter enables RuvB to convert the ATP-contained energy into a lever motion, pulling 2 nucleotides of DNA out of the RuvA tetramer per ATP hydrolyzed, thus driving DNA branch migration. The RuvB motors rotate together with the DNA substrate, which together with the progressing nucleotide cycle form the mechanistic basis for DNA recombination by continuous HJ branch migration. Branch migration allows RuvC to scan DNA until it finds its consensus sequence, where it cleaves and resolves cruciform DNA. The protein is Holliday junction branch migration complex subunit RuvB of Prochlorococcus marinus (strain MIT 9313).